The sequence spans 303 residues: Large ribosomal subunit protein uL18 (303 aa).

It belongs to the universal ribosomal protein uL18 family. In terms of assembly, component of the large ribosomal subunit (LSU).

It localises to the cytoplasm. The protein resides in the nucleus. Its function is as follows. Component of the ribosome, a large ribonucleoprotein complex responsible for the synthesis of proteins in the cell. The small ribosomal subunit (SSU) binds messenger RNAs (mRNAs) and translates the encoded message by selecting cognate aminoacyl-transfer RNA (tRNA) molecules. The large subunit (LSU) contains the ribosomal catalytic site termed the peptidyl transferase center (PTC), which catalyzes the formation of peptide bonds, thereby polymerizing the amino acids delivered by tRNAs into a polypeptide chain. The nascent polypeptides leave the ribosome through a tunnel in the LSU and interact with protein factors that function in enzymatic processing, targeting, and the membrane insertion of nascent chains at the exit of the ribosomal tunnel. This chain is Large ribosomal subunit protein uL18 (RPL5), found in Oikopleura dioica (Tunicate).